The primary structure comprises 529 residues: MFS glucose transporter mfs1 (529 aa).

The next 12 helical transmembrane spans lie at 7 to 27 (VYFL…DISS), 52 to 72 (SITC…SFIA), 86 to 106 (ILWI…LLVV), 109 to 129 (VIAG…QAEI), 138 to 158 (VISL…FIQY), 179 to 199 (IPWG…FLFP), 272 to 292 (LQMW…VYIM), 301 to 321 (LLTA…AIIY), 330 to 350 (AILI…GLQG), 375 to 395 (AVGK…ATTI), 415 to 439 (AVSL…PLLW), and 446 to 464 (YMIF…FLTA).

It belongs to the major facilitator superfamily. Sugar transporter (TC 2.A.1.1) family.

It localises to the membrane. In terms of biological role, probable MFS glucose transporter; part of the gene cluster 27 that mediates the biosynthesis of asparasone A, a sclerotium-specific anthraquinone pigment important for sclerotial survival. The protein is MFS glucose transporter mfs1 of Aspergillus flavus (strain ATCC 200026 / FGSC A1120 / IAM 13836 / NRRL 3357 / JCM 12722 / SRRC 167).